Consider the following 210-residue polypeptide: Thymidylate kinase (210 aa).

Position 10 to 17 (10 to 17 (GLEGAGKT)) interacts with ATP.

Belongs to the thymidylate kinase family.

It catalyses the reaction dTMP + ATP = dTDP + ADP. Phosphorylation of dTMP to form dTDP in both de novo and salvage pathways of dTTP synthesis. This Actinobacillus succinogenes (strain ATCC 55618 / DSM 22257 / CCUG 43843 / 130Z) protein is Thymidylate kinase.